The following is a 165-amino-acid chain: Nucleotide-binding protein Cagg_1607 (165 aa).

This sequence belongs to the YajQ family.

Its function is as follows. Nucleotide-binding protein. The polypeptide is Nucleotide-binding protein Cagg_1607 (Chloroflexus aggregans (strain MD-66 / DSM 9485)).